A 173-amino-acid chain; its full sequence is Ribosome maturation factor RimM (173 aa).

One can recognise a PRC barrel domain in the interval 95–169; it reads EGSYYFKDIL…RIEVTLLEGL (75 aa).

This sequence belongs to the RimM family. Binds ribosomal protein uS19.

It is found in the cytoplasm. In terms of biological role, an accessory protein needed during the final step in the assembly of 30S ribosomal subunit, possibly for assembly of the head region. Essential for efficient processing of 16S rRNA. May be needed both before and after RbfA during the maturation of 16S rRNA. It has affinity for free ribosomal 30S subunits but not for 70S ribosomes. The polypeptide is Ribosome maturation factor RimM (Lactobacillus gasseri (strain ATCC 33323 / DSM 20243 / BCRC 14619 / CIP 102991 / JCM 1131 / KCTC 3163 / NCIMB 11718 / NCTC 13722 / AM63)).